The sequence spans 453 residues: UDP-N-acetylmuramoylalanine--D-glutamate ligase (453 aa).

119-125 is a binding site for ATP; that stretch reads GTNGKTT.

It belongs to the MurCDEF family.

It is found in the cytoplasm. It catalyses the reaction UDP-N-acetyl-alpha-D-muramoyl-L-alanine + D-glutamate + ATP = UDP-N-acetyl-alpha-D-muramoyl-L-alanyl-D-glutamate + ADP + phosphate + H(+). Its pathway is cell wall biogenesis; peptidoglycan biosynthesis. Functionally, cell wall formation. Catalyzes the addition of glutamate to the nucleotide precursor UDP-N-acetylmuramoyl-L-alanine (UMA). The polypeptide is UDP-N-acetylmuramoylalanine--D-glutamate ligase (Syntrophus aciditrophicus (strain SB)).